Here is a 608-residue protein sequence, read N- to C-terminus: Afamin (608 aa).

A signal peptide spans 1–21 (MRHLKLTGFIFFLLPLTESLA). 3 consecutive Albumin domains span residues 22-210 (LPTK…APIT), 211-403 (QYLK…KFNE), and 404-599 (TTQR…KTGD). N-linked (GlcNAc...) asparagine glycosylation is present at Asn-33. Cystine bridges form between Cys-77/Cys-86, Cys-99/Cys-114, Cys-113/Cys-124, Cys-148/Cys-193, Cys-192/Cys-201, Cys-224/Cys-270, Cys-269/Cys-277, Cys-289/Cys-303, Cys-302/Cys-313, Cys-340/Cys-385, and Cys-384/Cys-393. Asn-109 is a glycosylation site (N-linked (GlcNAc...) asparagine). Asn-153 is a glycosylation site (N-linked (GlcNAc...) asparagine). The segment at 215–319 (ASSSYQRNVC…REACIINANK (105 aa)) is binding pocket for hydrophobic ligands. Asn-402 carries N-linked (GlcNAc...) asparagine glycosylation. Disulfide bonds link Cys-416/Cys-462, Cys-461/Cys-470, Cys-483/Cys-499, Cys-498/Cys-509, and Cys-580/Cys-589. An N-linked (GlcNAc...) asparagine glycan is attached at Asn-488. Positions 583 to 608 (VQEPESCFSPESSKTGDESQATEKQR) are disordered. Residues 596–608 (KTGDESQATEKQR) show a composition bias toward basic and acidic residues.

The protein belongs to the ALB/AFP/VDB family. As to quaternary structure, forms a 1:1 complex with Wnt family members; interacts with WNT1, WNT2B, WNT3, WNT5A, WNT7A, WNT7B, WNT8, WNT9A, WNT9B, WNT10A and WNT10B. Interacts with WNT3A. N-glycosylated; more than 90% of the glycans are sialylated. In terms of tissue distribution, detected in brain, especially on brain capillaries (at protein level). Expressed in isolated brain capillaries.

Its subcellular location is the secreted. Its function is as follows. Functions as a carrier for hydrophobic molecules in body fluids. Essential for the solubility and activity of lipidated Wnt family members, including WNT1, WNT2B, WNT3, WNT3A, WNT5A, WNT7A, WNT7B, WNT8, WNT9A, WNT9B, WNT10A and WNT10B. Binds vitamin E. May transport vitamin E in body fluids under conditions where the lipoprotein system is not sufficient. May be involved in the transport of vitamin E across the blood-brain barrier. The polypeptide is Afamin (Afm) (Mus musculus (Mouse)).